We begin with the raw amino-acid sequence, 152 residues long: Xanthine-guanine phosphoribosyltransferase (152 aa).

5-phospho-alpha-D-ribose 1-diphosphate is bound by residues 37–38 and 88–96; these read RG and DDLVDTGNT. Aspartate 89 is a Mg(2+) binding site. The guanine site is built by aspartate 92 and isoleucine 135. Xanthine contacts are provided by aspartate 92 and isoleucine 135. Residues 92–96 and 134–135 each bind GMP; these read DTGNT and WI.

This sequence belongs to the purine/pyrimidine phosphoribosyltransferase family. XGPT subfamily. In terms of assembly, homotetramer. It depends on Mg(2+) as a cofactor.

It localises to the cell inner membrane. It catalyses the reaction GMP + diphosphate = guanine + 5-phospho-alpha-D-ribose 1-diphosphate. It carries out the reaction XMP + diphosphate = xanthine + 5-phospho-alpha-D-ribose 1-diphosphate. The catalysed reaction is IMP + diphosphate = hypoxanthine + 5-phospho-alpha-D-ribose 1-diphosphate. It participates in purine metabolism; GMP biosynthesis via salvage pathway; GMP from guanine: step 1/1. The protein operates within purine metabolism; XMP biosynthesis via salvage pathway; XMP from xanthine: step 1/1. Functionally, purine salvage pathway enzyme that catalyzes the transfer of the ribosyl-5-phosphate group from 5-phospho-alpha-D-ribose 1-diphosphate (PRPP) to the N9 position of the 6-oxopurines guanine and xanthine to form the corresponding ribonucleotides GMP (guanosine 5'-monophosphate) and XMP (xanthosine 5'-monophosphate), with the release of PPi. To a lesser extent, also acts on hypoxanthine. The chain is Xanthine-guanine phosphoribosyltransferase from Mannheimia succiniciproducens (strain KCTC 0769BP / MBEL55E).